A 159-amino-acid polypeptide reads, in one-letter code: Biogenesis of lysosome-related organelles complex 1 subunit 2 (159 aa).

The tract at residues Met1–Ala37 is disordered. A compositionally biased stretch (polar residues) spans Gln14 to Glu36. A coiled-coil region spans residues Glu69 to Asp134.

The protein belongs to the BLOC1S2 family. As to quaternary structure, homodimer. Component of the biogenesis of lysosome-related organelles complex-1 (BLOC-1) composed of Blos1, Blos2, Blos3, Blos4, Dysb, Muted, Pldn and Snapin. Interacts with Snapin.

Functionally, component of the biogenesis of lysosome-related organelles complex-1 (BLOC-1) involved in pigment granule biogenesis. This is Biogenesis of lysosome-related organelles complex 1 subunit 2 from Drosophila melanogaster (Fruit fly).